The sequence spans 122 residues: Large ribosomal subunit protein uL14 (122 aa).

Belongs to the universal ribosomal protein uL14 family. Part of the 50S ribosomal subunit. Forms a cluster with proteins L3 and L19. In the 70S ribosome, L14 and L19 interact and together make contacts with the 16S rRNA in bridges B5 and B8.

Functionally, binds to 23S rRNA. Forms part of two intersubunit bridges in the 70S ribosome. The protein is Large ribosomal subunit protein uL14 of Helicobacter acinonychis (strain Sheeba).